Consider the following 273-residue polypeptide: SPRY domain-containing SOCS box protein 1 (273 aa).

The residue at position 31 (Y31) is a Phosphotyrosine. The B30.2/SPRY domain maps to 33–231 (KPTRLDLLLD…IRMRYLNGLD (199 aa)). Residues 232-273 (PEPLPLMDLCRRSVRLALGKERLGAIPALPLPASLKAYLLYQ) enclose the SOCS box domain.

The protein belongs to the SPSB family. In terms of assembly, component of the probable ECS(SPSB1) E3 ubiquitin-protein ligase complex which contains CUL5, RNF7/RBX2, Elongin BC complex and SPSB1. Interacts with CUL5, RNF7, ELOB and ELOC. Directly interacts with MET tyrosine kinase domain in the presence and in the absence of HGF, however HGF treatment has a positive effect on this interaction. When phosphorylated, interacts with RASA1 without affecting its stability. Interacts (via B30.2/SPRY domain) with PAWR; this interaction is direct and occurs in association with the Elongin BC complex. Interacts with EPHB2. Interacts with NOS2.

It localises to the cytoplasm. Its subcellular location is the cytosol. It functions in the pathway protein modification; protein ubiquitination. Functionally, substrate recognition component of a SCF-like ECS (Elongin BC-CUL2/5-SOCS-box protein) E3 ubiquitin-protein ligase complex which mediates the ubiquitination and subsequent proteasomal degradation of target proteins. Negatively regulates nitric oxide (NO) production and limits cellular toxicity in activated macrophages by mediating the ubiquitination and proteasomal degradation of NOS2. Acts as a bridge which links the NOS2 with the ECS E3 ubiquitin ligase complex components ELOC and CUL5. This chain is SPRY domain-containing SOCS box protein 1 (Spsb1), found in Mus musculus (Mouse).